The following is a 326-amino-acid chain: Protein-ribulosamine 3-kinase, chloroplastic (326 aa).

The transit peptide at 1-30 directs the protein to the chloroplast; that stretch reads MAVASLSICFSARPHLLLRNFSPRPKFVAM. Residue 125-127 participates in ATP binding; that stretch reads EFI. The Proton acceptor role is filled by Asp230.

This sequence belongs to the fructosamine kinase family.

It localises to the plastid. Its subcellular location is the chloroplast. It catalyses the reaction N(6)-D-ribulosyl-L-lysyl-[protein] + ATP = N(6)-(3-O-phospho-D-ribulosyl)-L-lysyl-[protein] + ADP + H(+). The catalysed reaction is N(6)-(D-erythrulosyl)-L-lysyl-[protein] + ATP = N(6)-(3-O-phospho-D-erythrulosyl)-L-lysyl-[protein] + ADP + H(+). Its function is as follows. Initiates a process leading to the deglycation of proteins. Phosphorylates low-molecular-mass and protein-bound erythrulosamines and ribulosamines, but not fructosamines or psicosamines, on the third carbon of the sugar moiety. Protein-bound erythrulosamine 3-phosphates and ribulosamine 3-phosphates are unstable and decompose under physiological conditions. The protein is Protein-ribulosamine 3-kinase, chloroplastic of Arabidopsis thaliana (Mouse-ear cress).